A 613-amino-acid chain; its full sequence is Methionine--tRNA ligase (613 aa).

A 'HIGH' region motif is present at residues 15–25; sequence PYANGPRHIGH. Residues cysteine 147, cysteine 150, cysteine 160, and cysteine 163 each contribute to the Zn(2+) site. Residues 351 to 355 carry the 'KMSKS' region motif; sequence KFSSS. Serine 354 lines the ATP pocket.

It belongs to the class-I aminoacyl-tRNA synthetase family. MetG type 1 subfamily. Monomer. It depends on Zn(2+) as a cofactor.

It is found in the cytoplasm. It carries out the reaction tRNA(Met) + L-methionine + ATP = L-methionyl-tRNA(Met) + AMP + diphosphate. In terms of biological role, is required not only for elongation of protein synthesis but also for the initiation of all mRNA translation through initiator tRNA(fMet) aminoacylation. The chain is Methionine--tRNA ligase from Corynebacterium efficiens (strain DSM 44549 / YS-314 / AJ 12310 / JCM 11189 / NBRC 100395).